The primary structure comprises 421 residues: UDP-N-acetylglucosamine 1-carboxyvinyltransferase (421 aa).

22-23 (KN) provides a ligand contact to phosphoenolpyruvate. Arginine 92 lines the UDP-N-acetyl-alpha-D-glucosamine pocket. Catalysis depends on cysteine 116, which acts as the Proton donor. Cysteine 116 bears the 2-(S-cysteinyl)pyruvic acid O-phosphothioketal mark. Residues 121 to 125 (RPVDQ), aspartate 304, and isoleucine 326 contribute to the UDP-N-acetyl-alpha-D-glucosamine site.

The protein belongs to the EPSP synthase family. MurA subfamily.

The protein resides in the cytoplasm. It carries out the reaction phosphoenolpyruvate + UDP-N-acetyl-alpha-D-glucosamine = UDP-N-acetyl-3-O-(1-carboxyvinyl)-alpha-D-glucosamine + phosphate. It functions in the pathway cell wall biogenesis; peptidoglycan biosynthesis. Functionally, cell wall formation. Adds enolpyruvyl to UDP-N-acetylglucosamine. The polypeptide is UDP-N-acetylglucosamine 1-carboxyvinyltransferase (Bordetella avium (strain 197N)).